The primary structure comprises 99 residues: Large ribosomal subunit protein bL27 (99 aa).

The disordered stretch occupies residues 1 to 21; it reads MAHKKGGGSTRNGRDSRAKRL.

Belongs to the bacterial ribosomal protein bL27 family.

This Thermomicrobium roseum (strain ATCC 27502 / DSM 5159 / P-2) protein is Large ribosomal subunit protein bL27.